A 237-amino-acid chain; its full sequence is tRNA (guanine-N(7)-)-methyltransferase (237 aa).

E67, E92, D119, and D142 together coordinate S-adenosyl-L-methionine. The active site involves D142. Substrate contacts are provided by residues K146, D178, and 215 to 218 (TKFE).

The protein belongs to the class I-like SAM-binding methyltransferase superfamily. TrmB family.

The enzyme catalyses guanosine(46) in tRNA + S-adenosyl-L-methionine = N(7)-methylguanosine(46) in tRNA + S-adenosyl-L-homocysteine. It functions in the pathway tRNA modification; N(7)-methylguanine-tRNA biosynthesis. Its function is as follows. Catalyzes the formation of N(7)-methylguanine at position 46 (m7G46) in tRNA. In Aeromonas hydrophila subsp. hydrophila (strain ATCC 7966 / DSM 30187 / BCRC 13018 / CCUG 14551 / JCM 1027 / KCTC 2358 / NCIMB 9240 / NCTC 8049), this protein is tRNA (guanine-N(7)-)-methyltransferase.